A 607-amino-acid chain; its full sequence is Elongation factor 4 (607 aa).

The tr-type G domain maps to 11-193; it reads SKIRNFSIIA…QIVEKVPAPT (183 aa). GTP is bound by residues 23 to 28 and 140 to 143; these read DHGKST and NKID.

It belongs to the TRAFAC class translation factor GTPase superfamily. Classic translation factor GTPase family. LepA subfamily.

It localises to the cell membrane. The catalysed reaction is GTP + H2O = GDP + phosphate + H(+). Functionally, required for accurate and efficient protein synthesis under certain stress conditions. May act as a fidelity factor of the translation reaction, by catalyzing a one-codon backward translocation of tRNAs on improperly translocated ribosomes. Back-translocation proceeds from a post-translocation (POST) complex to a pre-translocation (PRE) complex, thus giving elongation factor G a second chance to translocate the tRNAs correctly. Binds to ribosomes in a GTP-dependent manner. The sequence is that of Elongation factor 4 from Bacillus anthracis (strain A0248).